A 761-amino-acid chain; its full sequence is MLPSENGDEDQGSQKPKRAYLRKGEGTARFRMTRRSAPLTSSPAINLPRFTPTNSAPSSARTIDSGIPHDDDTRPPTTASLPLDQPSVLESHDSGNRSESNERREEDNVEVVSAMQSYVPGDRSSSVLETCSKVSEEATQLRAEADRITAQANFINSMKSVSITPSSYSSNISGPIYQSTPKGSLRHDDLSDDPTFLPPPLVPPRNHSPQTLSSLASSGSLDTPQARPLAGNRLNMMVQNEAQTGISLLNNPRRQPMLPAHHHPSQKENVPERKAPSEHVYDEPLQIQRPHRRNREEQRQKHNLMLQLRDTIAHLDYASECVWSTRKKQEEAYAKRMKELEEDFESKMQMIQEDNTSEEERLKRERRDIERDRKILQKGIGEREKEHTQMIAKLREKLSNSESQNAKLRQDKRAVEEKMKKFIEENEKLTKDLNRNRATCQRLEKHIKQLRTEKEKDDREKEMFAKVAMNRKAAASGIATGSAASSRLPSVSSLASSMKTGSTGKGRTVSFADDEPEEQTLEAGEETMQPEFIMRPYETKQSRFGTSTMYRDSIGETTRVTSTIANGLLFEYSNGDFRWMNRQNSVEIYRIAVDKSIIVNLLQYNISFIYFFQRQLEVWRPGNNTTLISVKRREVRTELHCENGTYYTEMFDRNGRYVTKDFCRPEVFKDIPPGSACSYRDGGTRYVEYTAPEDFELVEPEYRLRWYQGKVMVCKIIKRPRCNEKTLRVQVDVTTGSGILEEVESQLKDGQSQKTTVFPWS.

The span at M1 to Q11 shows a compositional bias: acidic residues. Residues M1–V109 are disordered. The span at T51–T62 shows a compositional bias: polar residues. The span at E90 to E106 shows a compositional bias: basic and acidic residues. The stretch at E129–N156 forms a coiled coil. The span at T164–S173 shows a compositional bias: low complexity. Disordered stretches follow at residues T164–P228 and P252–V280. The segment covering Q210–T223 has biased composition (polar residues). Basic and acidic residues predominate over residues S265–V280. Residues R326–F464 adopt a coiled-coil conformation. Over residues A479–S497 the composition is skewed to low complexity. The disordered stretch occupies residues A479–S510.

The protein localises to the cytoplasm. It is found in the cytoskeleton. It localises to the microtubule organizing center. Its subcellular location is the centrosome. Its function is as follows. Required for centrosome duplication. Plays a central role in determining centrosome size. The sequence is that of Spindle assembly abnormal protein 4 (sas-4) from Caenorhabditis briggsae.